The sequence spans 260 residues: Acetylglutamate kinase (260 aa).

Residues 46-47 (GG), arginine 68, and asparagine 160 contribute to the substrate site.

The protein belongs to the acetylglutamate kinase family. ArgB subfamily.

It localises to the cytoplasm. It catalyses the reaction N-acetyl-L-glutamate + ATP = N-acetyl-L-glutamyl 5-phosphate + ADP. It participates in amino-acid biosynthesis; L-arginine biosynthesis; N(2)-acetyl-L-ornithine from L-glutamate: step 2/4. In terms of biological role, catalyzes the ATP-dependent phosphorylation of N-acetyl-L-glutamate. The protein is Acetylglutamate kinase of Shewanella putrefaciens (strain CN-32 / ATCC BAA-453).